We begin with the raw amino-acid sequence, 440 residues long: Enolase 1-2 (440 aa).

Residues H160 and E169 each coordinate substrate. The active-site Proton donor is the E212. Mg(2+)-binding residues include D247, E296, and D321. The substrate site is built by E296 and D321. K346 serves as the catalytic Proton acceptor. Substrate is bound by residues 373–376 and K397; that span reads SHRS.

Belongs to the enolase family. In terms of assembly, homodimer. It depends on Mg(2+) as a cofactor.

It localises to the cytoplasm. It catalyses the reaction (2R)-2-phosphoglycerate = phosphoenolpyruvate + H2O. Its pathway is carbohydrate degradation; glycolysis; pyruvate from D-glyceraldehyde 3-phosphate: step 4/5. The sequence is that of Enolase 1-2 (eno102) from Schizosaccharomyces pombe (strain 972 / ATCC 24843) (Fission yeast).